Here is a 225-residue protein sequence, read N- to C-terminus: Protein-disulfide oxidoreductase DsbI (225 aa).

A helical membrane pass occupies residues phenylalanine 27–phenylalanine 47. An intrachain disulfide couples cysteine 56 to cysteine 59. 2 helical membrane passes run alanine 65–leucine 85 and leucine 87–leucine 107. Cysteine 128 and cysteine 154 are disulfide-bonded. The chain crosses the membrane as a helical span at residues cysteine 199 to leucine 219.

It belongs to the DsbB family. DsbI subfamily. In terms of assembly, interacts with DsbL.

It localises to the cell inner membrane. Its function is as follows. Required for disulfide bond formation in some proteins. Part of a redox system composed of DsbI and DsbL that mediates formation of an essential disulfide bond in AssT. This chain is Protein-disulfide oxidoreductase DsbI, found in Salmonella choleraesuis (strain SC-B67).